A 428-amino-acid chain; its full sequence is Cell division protein FtsZ (428 aa).

Residues 73-77 (GGGGN), 160-162 (GTG), Glu-191, Arg-195, and Asp-239 contribute to the GTP site. A disordered region spans residues 378-428 (NAANARVVSAPPKRTPTQTPLTNSPAPTPEPKEKSGLDIPDFLQRRRPPKN). Residues 392-402 (TPTQTPLTNSP) show a composition bias toward polar residues.

The protein belongs to the FtsZ family. Homodimer. Polymerizes to form a dynamic ring structure in a strictly GTP-dependent manner. Interacts directly with several other division proteins.

The protein localises to the cytoplasm. In terms of biological role, essential cell division protein that forms a contractile ring structure (Z ring) at the future cell division site. The regulation of the ring assembly controls the timing and the location of cell division. One of the functions of the FtsZ ring is to recruit other cell division proteins to the septum to produce a new cell wall between the dividing cells. Binds GTP and shows GTPase activity. This is Cell division protein FtsZ from Nostoc sp. (strain PCC 7120 / SAG 25.82 / UTEX 2576).